Reading from the N-terminus, the 350-residue chain is Ketol-acid reductoisomerase (NADP(+)) (350 aa).

Positions Ala-3 to Thr-183 constitute a KARI N-terminal Rossmann domain. NADP(+) is bound by residues Tyr-26–Gln-29, Arg-49, Ser-52, Ser-54, and Asp-84–Gln-87. His-109 is an active-site residue. An NADP(+)-binding site is contributed by Gly-135. Residues Thr-184 to Asn-327 enclose the KARI C-terminal knotted domain. 4 residues coordinate Mg(2+): Asp-192, Glu-196, Glu-228, and Glu-232. Residue Ser-253 coordinates substrate.

Belongs to the ketol-acid reductoisomerase family. The cofactor is Mg(2+).

It carries out the reaction (2R)-2,3-dihydroxy-3-methylbutanoate + NADP(+) = (2S)-2-acetolactate + NADPH + H(+). It catalyses the reaction (2R,3R)-2,3-dihydroxy-3-methylpentanoate + NADP(+) = (S)-2-ethyl-2-hydroxy-3-oxobutanoate + NADPH + H(+). Its pathway is amino-acid biosynthesis; L-isoleucine biosynthesis; L-isoleucine from 2-oxobutanoate: step 2/4. It participates in amino-acid biosynthesis; L-valine biosynthesis; L-valine from pyruvate: step 2/4. Its function is as follows. Involved in the biosynthesis of branched-chain amino acids (BCAA). Catalyzes an alkyl-migration followed by a ketol-acid reduction of (S)-2-acetolactate (S2AL) to yield (R)-2,3-dihydroxy-isovalerate. In the isomerase reaction, S2AL is rearranged via a Mg-dependent methyl migration to produce 3-hydroxy-3-methyl-2-ketobutyrate (HMKB). In the reductase reaction, this 2-ketoacid undergoes a metal-dependent reduction by NADPH to yield (R)-2,3-dihydroxy-isovalerate. This is Ketol-acid reductoisomerase (NADP(+)) from Bifidobacterium animalis subsp. lactis (strain AD011).